A 467-amino-acid chain; its full sequence is DNA methyltransferase 1-associated protein 1 (467 aa).

Basic and acidic residues-rich tracts occupy residues 1–11 (MATGADVRDIL) and 26–48 (SKKD…LTFK). The segment at 1 to 48 (MATGADVRDILELGGPEGDAASGTISKKDIINPDKKKSKKSSETLTFK) is disordered. A Glycyl lysine isopeptide (Lys-Gly) (interchain with G-Cter in SUMO2) cross-link involves residue Lys-27. Positions 149-199 (DDAWTKAETDHLFDLSRRFDLRFVVIHDRYDHQQFKKRSVEDLKERYYHIC) constitute an SANT domain. Lys-214 participates in a covalent cross-link: Glycyl lysine isopeptide (Lys-Gly) (interchain with G-Cter in SUMO2). Residues 225-275 (RRKEQLERLYNRTPEQVAEEEYLLQELRKIEARKKEREKRSQDLQKLITAA) are a coiled coil. Residues 258–267 (KKEREKRSQD) are compositionally biased toward basic and acidic residues. Disordered regions lie at residues 258–305 (KKER…PAVP) and 404–467 (LGGP…AKKP). Residues 406–422 (GPATPASGPGPASAEPA) are compositionally biased toward low complexity. Position 445 is a phosphothreonine (Thr-445). At Ser-448 the chain carries Phosphoserine.

Component of the NuA4 histone acetyltransferase complex which contains the catalytic subunit KAT5/TIP60 and the subunits EP400, TRRAP/PAF400, BRD8/SMAP, EPC1, DMAP1/DNMAP1, RUVBL1/TIP49, RUVBL2, ING3, actin, ACTL6A/BAF53A, MORF4L1/MRG15, MORF4L2/MRGX, MRGBP, YEATS4/GAS41, VPS72/YL1 and MEAF6. Component of a NuA4-related complex which contains EP400, TRRAP/PAF400, SRCAP, BRD8/SMAP, EPC1, DMAP1/DNMAP1, RUVBL1/TIP49, RUVBL2, actin, ACTL6A/BAF53A, VPS72 and YEATS4/GAS41. DMAP1 also forms a complex with DNMT1 and HDAC2. Throughout S phase it interacts directly with the N-terminus of DNMT1, which serves to recruit DMAP1 to replication foci. DMAP1 interacts with ING1, a component of the mSin3A transcription repressor complex, although this interaction is not required for recruitment of ING1 to heterochromatin. Interacts directly with the transcriptional corepressor TSG101. Interacts with the pro-apoptotic protein DAXX. Interacts with URI1.

The protein resides in the nucleus. It localises to the cytoplasm. In terms of biological role, involved in transcription repression and activation. Its interaction with HDAC2 may provide a mechanism for histone deacetylation in heterochromatin following replication of DNA at late firing origins. Can also repress transcription independently of histone deacetylase activity. May specifically potentiate DAXX-mediated repression of glucocorticoid receptor-dependent transcription. Component of the NuA4 histone acetyltransferase (HAT) complex which is involved in transcriptional activation of select genes principally by acetylation of nucleosomal histones H4 and H2A. This modification may both alter nucleosome - DNA interactions and promote interaction of the modified histones with other proteins which positively regulate transcription. This complex may be required for the activation of transcriptional programs associated with oncogene and proto-oncogene mediated growth induction, tumor suppressor mediated growth arrest and replicative senescence, apoptosis, and DNA repair. NuA4 may also play a direct role in DNA repair when recruited to sites of DNA damage. Participates in the nuclear localization of URI1 and increases its transcriptional corepressor activity. The chain is DNA methyltransferase 1-associated protein 1 (DMAP1) from Homo sapiens (Human).